Here is a 577-residue protein sequence, read N- to C-terminus: Zona pellucida sperm-binding protein 3 receptor (577 aa).

A signal peptide spans 1–32; that stretch reads MTAWSLHELWKTSHSTLFQVTLATVLMAPVLG. Sushi domains follow at residues 33–92, 93–154, 155–219, 220–279, 280–346, and 347–412; these read DCGP…FCAR, KRCK…ECVI, ATCE…ACEK, IVCH…TCEP, NGCI…GCER, and VCCP…SCEA. Disulfide bonds link cysteine 34-cysteine 78, cysteine 64-cysteine 90, cysteine 95-cysteine 136, cysteine 122-cysteine 152, cysteine 157-cysteine 200, cysteine 186-cysteine 217, cysteine 222-cysteine 264, cysteine 250-cysteine 277, cysteine 282-cysteine 332, cysteine 316-cysteine 344, cysteine 349-cysteine 397, and cysteine 382-cysteine 410. N-linked (GlcNAc...) asparagine glycans are attached at residues asparagine 72 and asparagine 81. Residues asparagine 144, asparagine 195, and asparagine 204 are each glycosylated (N-linked (GlcNAc...) asparagine). N-linked (GlcNAc...) asparagine glycosylation is present at asparagine 335. N-linked (GlcNAc...) asparagine glycans are attached at residues asparagine 426, asparagine 431, asparagine 434, asparagine 443, asparagine 462, asparagine 475, and asparagine 497. Residues 451 to 509 enclose the Sushi 7 domain; the sequence is AVCPKPEIINGNLSVEKEIYAEMENITIQCDSGYDLVGSSNIICLENRTWYPDIPFCIM. Intrachain disulfides connect cysteine 453–cysteine 494 and cysteine 480–cysteine 507.

Homomultimer; disulfide-linked. In terms of processing, glycosylated. As to expression, testis specific.

The protein resides in the cytoplasmic vesicle. The protein localises to the secretory vesicle. It localises to the acrosome lumen. Its function is as follows. Binds to ZP3 glycoprotein in egg zona pellucida. Probably involved in interactions between sperm acrosome and egg zona pellucida during and immediately following the acrosome reaction. This chain is Zona pellucida sperm-binding protein 3 receptor (Zp3r), found in Rattus norvegicus (Rat).